Here is a 128-residue protein sequence, read N- to C-terminus: Protein C10 (128 aa).

Belongs to the UPF0456 family.

The protein resides in the cytoplasm. In Xenopus tropicalis (Western clawed frog), this protein is Protein C10.